We begin with the raw amino-acid sequence, 410 residues long: Secreted protein PRY1 (410 aa).

Residues 1–20 form the signal peptide; the sequence is MKQNYILSIILCYLLANVHS. Disordered stretches follow at residues 64-86, 102-132, and 148-260; these read PAPV…STPS, SDSD…SSSS, and SSSS…SSSS. Residues 148–179 are compositionally biased toward low complexity; it reads SSSSTPSSISQQQQQQQGSPASGSNSPNSAQP. Residues 197 to 211 are compositionally biased toward gly residues; that stretch reads SGLGSGFGSGFGSGS. A compositionally biased stretch (low complexity) spans 212-260; sequence GSDSDSGSGLPSASSSTIIQQQPSSSNIGSSSTSSSSSSSSSSSSSSSS. The SCP domain occupies 283–394; that stretch reads LDAHNKYRAQ…NWGLYVVCEY (112 aa).

This sequence belongs to the CRISP family.

It localises to the secreted. Functionally, secreted protein that acts as a virulence factor during infections. This is Secreted protein PRY1 (PRY1) from Candida albicans (strain SC5314 / ATCC MYA-2876) (Yeast).